A 136-amino-acid chain; its full sequence is Large ribosomal subunit protein eL27B (136 aa).

This sequence belongs to the eukaryotic ribosomal protein eL27 family. As to quaternary structure, component of the large ribosomal subunit (LSU). Mature yeast ribosomes consist of a small (40S) and a large (60S) subunit. The 40S small subunit contains 1 molecule of ribosomal RNA (18S rRNA) and 33 different proteins (encoded by 57 genes). The large 60S subunit contains 3 rRNA molecules (25S, 5.8S and 5S rRNA) and 46 different proteins (encoded by 81 genes).

The protein resides in the cytoplasm. Its function is as follows. Component of the ribosome, a large ribonucleoprotein complex responsible for the synthesis of proteins in the cell. The small ribosomal subunit (SSU) binds messenger RNAs (mRNAs) and translates the encoded message by selecting cognate aminoacyl-transfer RNA (tRNA) molecules. The large subunit (LSU) contains the ribosomal catalytic site termed the peptidyl transferase center (PTC), which catalyzes the formation of peptide bonds, thereby polymerizing the amino acids delivered by tRNAs into a polypeptide chain. The nascent polypeptides leave the ribosome through a tunnel in the LSU and interact with protein factors that function in enzymatic processing, targeting, and the membrane insertion of nascent chains at the exit of the ribosomal tunnel. The sequence is that of Large ribosomal subunit protein eL27B from Saccharomyces cerevisiae (strain ATCC 204508 / S288c) (Baker's yeast).